We begin with the raw amino-acid sequence, 223 residues long: Homeobox protein egl-5 (223 aa).

Positions 1 to 25 (MNTSTSAFDFGSSTASSAATSTTSS) are enriched in low complexity. 2 disordered regions span residues 1 to 58 (MNTS…STEA) and 168 to 191 (KKEKQRVDDHTEHTPLLPANPPKG). A DNA-binding region (homeobox) is located at residues 112-171 (SKKGRQTYQRYQTSVLEAKFQQSSYVSKKQREELRLQTQLTDRQIKIWFQNRRMKAKKEK).

It belongs to the Abd-B homeobox family. Interacts with the TCF transcription factor pop-1.

Its subcellular location is the nucleus. In terms of biological role, involved in control of cell fate and pattern formation along the anterior-posterior axis, acting mainly in the tail. Required during embryonic and postembryonic development. Essential for the determination of specific neurons, including the PLM touch neurons. Plays a role in neural fate specification in the hermaphrodite-specific neuron (HSN)/PHB neuron lineage, acting in concert with T-box protein tbx-2 and the asymmetric cell division protein ham-1. Required for male gonadal fate determination, acting in parallel with a WNT/beta-catenin pathway, perhaps by recruiting pop-1 to male-specific gonadal target genes. Involved in development of the hermaphrodite hindgut, and for the response to rectal infection by the coryneform bacterium M.nematophilum. This Caenorhabditis elegans protein is Homeobox protein egl-5.